A 274-amino-acid polypeptide reads, in one-letter code: Thiamine kinase (274 aa).

This sequence belongs to the thiamine kinase family.

The enzyme catalyses thiamine + ATP = thiamine phosphate + ADP + H(+). It participates in cofactor biosynthesis; thiamine diphosphate biosynthesis; thiamine phosphate from thiamine: step 1/1. In terms of biological role, catalyzes the ATP-dependent phosphorylation of thiamine to thiamine phosphate. Is involved in thiamine salvage. This Shigella boydii serotype 4 (strain Sb227) protein is Thiamine kinase.